We begin with the raw amino-acid sequence, 302 residues long: Transmembrane protein 191C (302 aa).

Disordered stretches follow at residues 1–21 (MAAT…GRQR) and 54–73 (LRRR…EAAR). Positions 5-160 (QELLLQLQKD…EKLQQDALQT (156 aa)) form a coiled coil. Residues 238 to 258 (VLGALQVLLTLPLLFLGLSLL) form a helical membrane-spanning segment.

It belongs to the TMEM191 family.

Its subcellular location is the membrane. The protein is Transmembrane protein 191C of Homo sapiens (Human).